The chain runs to 339 residues: D-erythrose-4-phosphate dehydrogenase (339 aa).

NAD(+) contacts are provided by residues 12-13 (RI) and Arg81. Residues 154–156 (SCT), Arg200, 213–214 (TK), and Arg236 contribute to the substrate site. Cys155 acts as the Nucleophile in catalysis. Asn318 serves as a coordination point for NAD(+).

It belongs to the glyceraldehyde-3-phosphate dehydrogenase family. Epd subfamily. In terms of assembly, homotetramer.

It is found in the cytoplasm. The catalysed reaction is D-erythrose 4-phosphate + NAD(+) + H2O = 4-phospho-D-erythronate + NADH + 2 H(+). It functions in the pathway cofactor biosynthesis; pyridoxine 5'-phosphate biosynthesis; pyridoxine 5'-phosphate from D-erythrose 4-phosphate: step 1/5. In terms of biological role, catalyzes the NAD-dependent conversion of D-erythrose 4-phosphate to 4-phosphoerythronate. The sequence is that of D-erythrose-4-phosphate dehydrogenase from Escherichia fergusonii (strain ATCC 35469 / DSM 13698 / CCUG 18766 / IAM 14443 / JCM 21226 / LMG 7866 / NBRC 102419 / NCTC 12128 / CDC 0568-73).